The primary structure comprises 120 residues: 2-amino-4-hydroxy-6-hydroxymethyldihydropteridine pyrophosphokinase (120 aa).

Belongs to the HPPK family.

It catalyses the reaction 6-hydroxymethyl-7,8-dihydropterin + ATP = (7,8-dihydropterin-6-yl)methyl diphosphate + AMP + H(+). Its pathway is cofactor biosynthesis; tetrahydrofolate biosynthesis; 2-amino-4-hydroxy-6-hydroxymethyl-7,8-dihydropteridine diphosphate from 7,8-dihydroneopterin triphosphate: step 4/4. Its function is as follows. Catalyzes the transfer of pyrophosphate from adenosine triphosphate (ATP) to 6-hydroxymethyl-7,8-dihydropterin, an enzymatic step in folate biosynthesis pathway. The protein is 2-amino-4-hydroxy-6-hydroxymethyldihydropteridine pyrophosphokinase (folK) of Pseudomonas putida (Arthrobacter siderocapsulatus).